The chain runs to 186 residues: Casparian strip membrane protein 5 (186 aa).

Residues 1–25 (MKTDAIELGVAKDSTPIGGANRGVS) are Cytoplasmic-facing. The chain crosses the membrane as a helical span at residues 26–46 (ILDFILRLVALVGTLASAILM). The Extracellular portion of the chain corresponds to 47 to 73 (GTTNETLPFATQFIRFRAEYDDLPTFT). N-linked (GlcNAc...) asparagine glycosylation is present at N50. The chain crosses the membrane as a helical span at residues 74-94 (FFVVANIVVSGYLLLSLPLSI). The Cytoplasmic portion of the chain corresponds to 95-106 (VNIVRSTAKNRR). A helical membrane pass occupies residues 107-127 (IILIIFDTAMLALLTAGASAA). The Extracellular portion of the chain corresponds to 128 to 156 (AAIVYLAHKGNTRANWFAICQQFNSFCER). A helical transmembrane segment spans residues 157 to 177 (ISGSLIGSFVGVAVFILLILM). The Cytoplasmic segment spans residues 178 to 186 (SASALSRRN).

This sequence belongs to the Casparian strip membrane proteins (CASP) family. Homodimer and heterodimers.

It localises to the cell membrane. Regulates membrane-cell wall junctions and localized cell wall deposition. Required for establishment of the Casparian strip membrane domain (CSD) and the subsequent formation of Casparian strips, a cell wall modification of the root endodermis that determines an apoplastic barrier between the intraorganismal apoplasm and the extraorganismal apoplasm and prevents lateral diffusion. This chain is Casparian strip membrane protein 5, found in Ricinus communis (Castor bean).